The following is a 162-amino-acid chain: Photosystem II extrinsic protein V (162 aa).

The N-terminal stretch at 1 to 25 is a signal peptide; sequence MLKRCLWLVVTVLFAWQVFNGTAIA. 4 residues coordinate heme c: C62, C65, H66, and H117.

It belongs to the cytochrome c family. PsbV subfamily. As to quaternary structure, PSII is composed of 1 copy each of membrane proteins PsbA, PsbB, PsbC, PsbD, PsbE, PsbF, PsbH, PsbI, PsbJ, PsbK, PsbL, PsbM, PsbT, PsbX, PsbY, PsbZ, Psb30/Ycf12, peripheral proteins PsbO, CyanoQ (PsbQ), PsbU, PsbV and a large number of cofactors. It forms dimeric complexes. The cofactor is heme c.

Its subcellular location is the cellular thylakoid membrane. One of the extrinsic, lumenal subunits of photosystem II (PSII). PSII is a light-driven water plastoquinone oxidoreductase, using light energy to abstract electrons from H(2)O, generating a proton gradient subsequently used for ATP formation. The extrinsic proteins stabilize the structure of photosystem II oxygen-evolving complex (OEC), the ion environment of oxygen evolution and protect the OEC against heat-induced inactivation. Low-potential cytochrome c that plays a role in the OEC of PSII. This chain is Photosystem II extrinsic protein V, found in Cyanothece sp. (strain PCC 7425 / ATCC 29141).